The following is a 95-amino-acid chain: uncharacterized protein (95 aa).

A coiled-coil region spans residues 14–50; sequence KMEQKLQEQLDGLLEKYTELLLGETNDELKEEVKQWI.

This is an uncharacterized protein from Bacillus subtilis (strain 168).